A 365-amino-acid polypeptide reads, in one-letter code: Forkhead box protein E4 (365 aa).

Over residues 1-13 the composition is skewed to basic and acidic residues; sequence MDSPDSVRVKCES. The interval 1-46 is disordered; it reads MDSPDSVRVKCESKGSCSPEEGLNNGLPEEHNQASGGRRRKRPVQR. The fork-head DNA-binding region spans 48–142; it reads KPPYSYIALI…DNGSFLRRRK (95 aa).

As to expression, first expressed at the end of gastrulation (stage 13) in the anterior ectodermal placode. During intermediate neural plate stages (stages 14-16), expression expands to the presumptive nasal ectoderm (PNE) and the presumptive lens ectoderm (PLE). By stages 18-21, expression begins to deplete in the PNE, while intensifying in the PLE so that by late neural stages (stages 22), expression is restricted to the PLE. Throughout tailbud stages (stage 23-31), expression is maintained in the lens placode and lens vesicle. In the maturing lens (stage 32-onwards), expression is restricted to the anterior lens epithelium, where it remains during the tadpole stage. In tadpoles there is additional expression in the ventral midline of the pharynx. Expression continues in the adult eye.

It localises to the nucleus. Its function is as follows. Probable transcription factor. Mediates lens formation in the embryo by promoting the proliferation of the specified lens ectoderm and suppressing its terminal differentiation. The polypeptide is Forkhead box protein E4 (Xenopus laevis (African clawed frog)).